Here is a 73-residue protein sequence, read N- to C-terminus: Large ribosomal subunit protein bL31 (73 aa).

The Zn(2+) site is built by Cys16, Cys18, Cys36, and Cys39.

It belongs to the bacterial ribosomal protein bL31 family. Type A subfamily. As to quaternary structure, part of the 50S ribosomal subunit. Requires Zn(2+) as cofactor.

Functionally, binds the 23S rRNA. The chain is Large ribosomal subunit protein bL31 from Desulfotalea psychrophila (strain LSv54 / DSM 12343).